A 558-amino-acid chain; its full sequence is Dihydroxy-acid dehydratase (558 aa).

Position 50 (Cys50) interacts with [2Fe-2S] cluster. Residue Asp82 participates in Mg(2+) binding. Cys123 provides a ligand contact to [2Fe-2S] cluster. Mg(2+) contacts are provided by Asp124 and Lys125. An N6-carboxylysine modification is found at Lys125. Residue Cys195 coordinates [2Fe-2S] cluster. Glu447 serves as a coordination point for Mg(2+). Residue Ser472 is the Proton acceptor of the active site.

Belongs to the IlvD/Edd family. As to quaternary structure, homodimer. [2Fe-2S] cluster serves as cofactor. Requires Mg(2+) as cofactor.

The catalysed reaction is (2R)-2,3-dihydroxy-3-methylbutanoate = 3-methyl-2-oxobutanoate + H2O. It carries out the reaction (2R,3R)-2,3-dihydroxy-3-methylpentanoate = (S)-3-methyl-2-oxopentanoate + H2O. Its pathway is amino-acid biosynthesis; L-isoleucine biosynthesis; L-isoleucine from 2-oxobutanoate: step 3/4. It participates in amino-acid biosynthesis; L-valine biosynthesis; L-valine from pyruvate: step 3/4. Functionally, functions in the biosynthesis of branched-chain amino acids. Catalyzes the dehydration of (2R,3R)-2,3-dihydroxy-3-methylpentanoate (2,3-dihydroxy-3-methylvalerate) into 2-oxo-3-methylpentanoate (2-oxo-3-methylvalerate) and of (2R)-2,3-dihydroxy-3-methylbutanoate (2,3-dihydroxyisovalerate) into 2-oxo-3-methylbutanoate (2-oxoisovalerate), the penultimate precursor to L-isoleucine and L-valine, respectively. This Saccharolobus islandicus (strain Y.N.15.51 / Yellowstone #2) (Sulfolobus islandicus) protein is Dihydroxy-acid dehydratase.